We begin with the raw amino-acid sequence, 1183 residues long: DNA-directed RNA polymerase subunit beta' (1183 aa).

Zn(2+) contacts are provided by Cys-60, Cys-62, Cys-75, and Cys-78. Positions 449, 451, and 453 each coordinate Mg(2+). The Zn(2+) site is built by Cys-794, Cys-867, Cys-874, and Cys-877.

It belongs to the RNA polymerase beta' chain family. In terms of assembly, the RNAP catalytic core consists of 2 alpha, 1 beta, 1 beta' and 1 omega subunit. When a sigma factor is associated with the core the holoenzyme is formed, which can initiate transcription. Requires Mg(2+) as cofactor. Zn(2+) serves as cofactor.

It carries out the reaction RNA(n) + a ribonucleoside 5'-triphosphate = RNA(n+1) + diphosphate. Its function is as follows. DNA-dependent RNA polymerase catalyzes the transcription of DNA into RNA using the four ribonucleoside triphosphates as substrates. This chain is DNA-directed RNA polymerase subunit beta', found in Caldanaerobacter subterraneus subsp. tengcongensis (strain DSM 15242 / JCM 11007 / NBRC 100824 / MB4) (Thermoanaerobacter tengcongensis).